We begin with the raw amino-acid sequence, 243 residues long: Killer cell lectin-like receptor subfamily I member 1 (243 aa).

The Cytoplasmic segment spans residues 1–80; the sequence is MPHSKHRDYT…RQGPKSAVWR (80 aa). 2 short sequence motifs (ITIM motif) span residues 16–21 and 47–52; these read IPYTEL and LKYAEL. The helical; Signal-anchor for type II membrane protein transmembrane segment at 81-101 threads the bilayer; that stretch reads VVTCVLGVLCVVLMITMGILV. Over 102-243 the chain is Extracellular; sequence PKLFSGQEEQ…KPYACEFNKM (142 aa). Asparagine 123, asparagine 191, asparagine 194, asparagine 200, and asparagine 214 each carry an N-linked (GlcNAc...) asparagine glycan. A C-type lectin domain is found at 137 to 239; it reads FGNNFYLFFR…CSSKKPYACE (103 aa). 2 disulfides stabilise this stretch: cysteine 158-cysteine 238 and cysteine 217-cysteine 230.

In terms of assembly, heterodimer with KLRE1. Interacts with PTPN6. In terms of tissue distribution, expressed in natural killer (NK) cells.

It is found in the cell membrane. Lectin-like receptor for natural killer (NK) cells. Heterodimer formation with KLRE1 mediates inhibition of NK cell cytolytic activity. This Rattus norvegicus (Rat) protein is Killer cell lectin-like receptor subfamily I member 1.